The chain runs to 1890 residues: DNA polymerase zeta catalytic subunit (1890 aa).

Composition is skewed to polar residues over residues 508–533 (QENL…NLRT) and 549–560 (PDSSTSNGASEN). 2 disordered regions span residues 508 to 565 (QENL…FRRY) and 922 to 942 (GDSN…DRGA). The span at 922–940 (GDSNIDSEKQPLRDNHNDR) shows a compositional bias: basic and acidic residues. Zn(2+) contacts are provided by cysteine 1789, cysteine 1792, cysteine 1803, and cysteine 1806. The CysA-type zinc-finger motif lies at 1789 to 1806 (CILCGEVVQESAQLCNRC). 4 residues coordinate [4Fe-4S] cluster: cysteine 1835, cysteine 1838, cysteine 1851, and cysteine 1856. Residues 1835 to 1856 (CRHCGGGDWVVQSGVKCNSLAC) carry the CysB motif motif.

This sequence belongs to the DNA polymerase type-B family. As to quaternary structure, forms DNA polymerase zeta with REV7. [4Fe-4S] cluster is required as a cofactor. Expressed in roots, leaves and flowers.

It is found in the nucleus. It carries out the reaction DNA(n) + a 2'-deoxyribonucleoside 5'-triphosphate = DNA(n+1) + diphosphate. Functionally, catalytic subunit of the error prone DNA polymerase zeta. Involved in damage-tolerance mechanisms through translesion DNA synthesis. This chain is DNA polymerase zeta catalytic subunit (REV3), found in Arabidopsis thaliana (Mouse-ear cress).